A 235-amino-acid chain; its full sequence is Small ribosomal subunit protein uS3 (235 aa).

One can recognise a KH type-2 domain in the interval 39–107 (IRTYIENELK…ETHLNIVEVR (69 aa)). The disordered stretch occupies residues 215–235 (SERRAVEGAGDGGGQRRRENA).

This sequence belongs to the universal ribosomal protein uS3 family. In terms of assembly, part of the 30S ribosomal subunit. Forms a tight complex with proteins S10 and S14.

In terms of biological role, binds the lower part of the 30S subunit head. Binds mRNA in the 70S ribosome, positioning it for translation. This chain is Small ribosomal subunit protein uS3, found in Chelativorans sp. (strain BNC1).